Here is a 194-residue protein sequence, read N- to C-terminus: Pyridoxal 5'-phosphate synthase subunit PdxT (194 aa).

50–52 (GES) contacts L-glutamine. Cys-82 (nucleophile) is an active-site residue. Residues Arg-109 and 136–137 (IR) contribute to the L-glutamine site. Residues His-172 and Glu-174 each act as charge relay system in the active site.

This sequence belongs to the glutaminase PdxT/SNO family. As to quaternary structure, in the presence of PdxS, forms a dodecamer of heterodimers. Only shows activity in the heterodimer.

It catalyses the reaction aldehydo-D-ribose 5-phosphate + D-glyceraldehyde 3-phosphate + L-glutamine = pyridoxal 5'-phosphate + L-glutamate + phosphate + 3 H2O + H(+). It carries out the reaction L-glutamine + H2O = L-glutamate + NH4(+). Its pathway is cofactor biosynthesis; pyridoxal 5'-phosphate biosynthesis. Its function is as follows. Catalyzes the hydrolysis of glutamine to glutamate and ammonia as part of the biosynthesis of pyridoxal 5'-phosphate. The resulting ammonia molecule is channeled to the active site of PdxS. The polypeptide is Pyridoxal 5'-phosphate synthase subunit PdxT (Streptococcus pneumoniae (strain CGSP14)).